The chain runs to 68 residues: uncharacterized protein (68 aa).

To B.subtilis XtrA.

This is an uncharacterized protein from Bacillus subtilis (strain 168).